Here is a 176-residue protein sequence, read N- to C-terminus: Insulin-like growth factor 1 (176 aa).

The b stretch occupies residues 45–73 (GPETLCGAELVDTLQFVCGERGFYFSKPT). 3 disulfides stabilise this stretch: C50–C92, C62–C105, and C91–C96. Residues 74–85 (GYGPSSRRSHNR) form a c region. Residues 86 to 106 (GIVDECCFQSCELRRLEMYCA) form an a region. The tract at residues 107-114 (PVKSGKAA) is d. A propeptide spans 115 to 176 (RSVRAQRHTD…GNTGGRNYRM (62 aa)) (e peptide). The interval 115–176 (RSVRAQRHTD…GNTGGRNYRM (62 aa)) is disordered. Residues 140-161 (RGTERRTAQHPDKTKPKKEVHQ) are compositionally biased toward basic and acidic residues.

The protein belongs to the insulin family.

The protein resides in the secreted. In terms of biological role, the insulin-like growth factors, isolated from plasma, are structurally and functionally related to insulin but have a much higher growth-promoting activity. Acts as a ligand for IGF1R. Binds to the alpha subunit of IGF1R, leading to the activation of the intrinsic tyrosine kinase activity which autophosphorylates tyrosine residues in the beta subunit thus initiatiating a cascade of down-stream signaling events leading to activation of the PI3K-AKT/PKB and the Ras-MAPK pathways. Binds to integrins. Its binding to integrins and subsequent ternary complex formation with integrins and IGFR1 are essential for IGF1 signaling. In Oncorhynchus mykiss (Rainbow trout), this protein is Insulin-like growth factor 1.